Here is a 69-residue protein sequence, read N- to C-terminus: uncharacterized protein (69 aa).

Transmembrane regions (helical) follow at residues 7–29 (LLSGLGLFLGVLAGLAGLILGSI) and 44–66 (ALQVLNFLLLFISTIAGGFLGLL).

It localises to the cell membrane. This is an uncharacterized protein from Archaeoglobus fulgidus (strain ATCC 49558 / DSM 4304 / JCM 9628 / NBRC 100126 / VC-16).